The chain runs to 2211 residues: Coagulation factor V (2211 aa).

An N-terminal signal peptide occupies residues methionine 1–alanine 28. Plastocyanin-like domains follow at residues lysine 30–cysteine 193, threonine 203–lysine 327, lysine 348–cysteine 525, and isoleucine 535–alanine 686. F5/8 type A domains lie at lysine 30–lysine 327 and lysine 348–alanine 686. Positions 139 and 140 each coordinate Ca(2+). Cysteine 167 and cysteine 193 form a disulfide bridge. 5 N-linked (GlcNAc...) asparagine glycosylation sites follow: asparagine 225, asparagine 239, asparagine 297, asparagine 382, and asparagine 460. An intrachain disulfide couples cysteine 248 to cysteine 329. Residues cysteine 499 and cysteine 525 are joined by a disulfide bond. Residues asparagine 553 and asparagine 587 are each glycosylated (N-linked (GlcNAc...) asparagine). Cysteines 607 and 688 form a disulfide. At threonine 644 the chain carries Phosphothreonine. The segment at serine 696–arginine 1564 is b. Tyrosine 697, tyrosine 701, and tyrosine 730 each carry sulfotyrosine. The propeptide at serine 742–arginine 1564 is activation peptide (connecting region). N-linked (GlcNAc...) asparagine glycosylation is found at asparagine 745, asparagine 756, asparagine 774, and asparagine 780. Residues leucine 814–histidine 844 form a disordered region. N-linked (GlcNAc...) asparagine glycans are attached at residues asparagine 902, asparagine 952, and asparagine 964. The segment covering threonine 954–tryptophan 969 has biased composition (polar residues). Residues threonine 954 to leucine 1039 form a disordered region. The segment covering proline 995–glutamate 1009 has biased composition (basic and acidic residues). N-linked (GlcNAc...) asparagine glycosylation is found at asparagine 1044, asparagine 1053, asparagine 1062, asparagine 1071, asparagine 1078, and asparagine 1094. 2 disordered regions span residues serine 1084–tyrosine 1162 and glutamine 1195–threonine 1471. Composition is skewed to polar residues over residues threonine 1091–proline 1103 and threonine 1127–proline 1160. 30 tandem repeats follow at residues serine 1124–serine 1137, proline 1138–serine 1151, alanine 1188–proline 1196, serine 1197–methionine 1205, alanine 1206–glutamate 1214, serine 1215–threonine 1223, serine 1224–glutamate 1232, serine 1233–threonine 1241, alanine 1242–glutamate 1250, serine 1251–threonine 1259, alanine 1260–glutamate 1268, serine 1269–threonine 1277, alanine 1278–glutamate 1286, serine 1287–threonine 1295, serine 1296–glutamate 1304, serine 1305–threonine 1313, alanine 1314–glutamate 1322, serine 1323–threonine 1331, alanine 1332–glutamate 1340, serine 1341–threonine 1349, serine 1350–glutamate 1358, serine 1359–threonine 1367, alanine 1368–glutamate 1376, serine 1377–threonine 1385, serine 1386–glutamate 1394, serine 1395–threonine 1403, alanine 1404–glutamate 1412, serine 1413–threonine 1421, proline 1422–glutamate 1430, and serine 1431–leucine 1439. The interval serine 1124–serine 1151 is 2 X 14 AA tandem repeats. Residues alanine 1188 to threonine 1453 are 30 X 9 AA approximate tandem repeats of [AS]-L-S-P-D-[LP]-[GS]-Q-[TE]. Composition is skewed to polar residues over residues glutamate 1214 to leucine 1234, threonine 1241 to leucine 1252, threonine 1259 to leucine 1270, glutamate 1286 to leucine 1306, threonine 1313 to leucine 1324, threonine 1331 to serine 1352, threonine 1367 to serine 1388, and threonine 1403 to leucine 1414. Over residues proline 1422–leucine 1441 the composition is skewed to low complexity. Residues aspartate 1440–threonine 1444 form a 2-29; truncated repeat. The span at lysine 1442 to leucine 1463 shows a compositional bias: polar residues. The 2-30 repeat unit spans residues serine 1445–threonine 1453. Residues asparagine 1451 and asparagine 1490 are each glycosylated (N-linked (GlcNAc...) asparagine). Residues tyrosine 1513, tyrosine 1529, tyrosine 1537, and tyrosine 1541 each carry the sulfotyrosine modification. Residues asparagine 1550 and asparagine 1690 are each glycosylated (N-linked (GlcNAc...) asparagine). Plastocyanin-like domains follow at residues asparagine 1569–cysteine 1738 and asparagine 1748–valine 1890. The F5/8 type A 3 domain maps to asparagine 1569–valine 1890. The cysteines at positions 1712 and 1738 are disulfide-linked. Cu cation-binding residues include histidine 1830 and histidine 1832. Asparagine 1839 carries an N-linked (GlcNAc...) asparagine glycan. Aspartate 1872 is a Cu cation binding site. 2 cysteine pairs are disulfide-bonded: cysteine 1894–cysteine 2048 and cysteine 2053–cysteine 2208. F5/8 type C domains follow at residues cysteine 1894–cysteine 2048 and cysteine 2053–cysteine 2208. Residues asparagine 1997 and asparagine 2196 are each glycosylated (N-linked (GlcNAc...) asparagine).

Belongs to the multicopper oxidase family. In terms of assembly, factor Va, the activated form of factor V, is composed of a heavy chain and a light chain, non-covalently bound. The interaction between the two chains is calcium-dependent. Forms heterodimer with SERPINA5. Thrombin activates factor V proteolytically to the active cofactor, factor Va (formation of a heavy chain at the N-terminus and a light chain at the C-terminus). In terms of processing, sulfation is required for efficient thrombin cleavage and activation and for full procoagulant activity. Post-translationally, activated protein C inactivates factor V and factor Va by proteolytic degradation.

The protein resides in the secreted. With respect to regulation, inhibited by SERPINA5. Functionally, central regulator of hemostasis. It serves as a critical cofactor for the prothrombinase activity of factor Xa that results in the activation of prothrombin to thrombin. The protein is Coagulation factor V (F5) of Bos taurus (Bovine).